A 122-amino-acid chain; its full sequence is MSTITKDQILEGVAALSVMEIVELISAMEEKFGVSAAAVAAGPAAAVEAAEEQTEFDVVLASFGENKVAVIKAVRGATGLGLKEAKDLVESAPAVLKEGVNKDEAETLKKSLEEAGASVEIK.

This sequence belongs to the bacterial ribosomal protein bL12 family. As to quaternary structure, homodimer. Part of the ribosomal stalk of the 50S ribosomal subunit. Forms a multimeric L10(L12)X complex, where L10 forms an elongated spine to which 2 to 4 L12 dimers bind in a sequential fashion. Binds GTP-bound translation factors.

Forms part of the ribosomal stalk which helps the ribosome interact with GTP-bound translation factors. Is thus essential for accurate translation. In Yersinia pseudotuberculosis serotype O:1b (strain IP 31758), this protein is Large ribosomal subunit protein bL12.